A 380-amino-acid polypeptide reads, in one-letter code: Cytochrome b (380 aa).

4 helical membrane passes run 34–54 (FGSLLGICLLTQILTGLLLAA), 78–99 (WLLRNLHANGASFFFICIYLHI), 114–134 (WNTGVVLLLTLMATAFVGYVL), and 179–199 (FFALHFLLPFMIAGLTLIHLT). 2 residues coordinate heme b: H84 and H98. Heme b is bound by residues H183 and H197. H202 provides a ligand contact to a ubiquinone. 4 consecutive transmembrane segments (helical) span residues 227-247 (LKDILGFMIMLLLLTTLALFH), 289-309 (LGGVLALAASVLILFLIPFLH), 321-341 (LSQLLFWLLVSNLFILTWIGS), and 348-368 (FIIIGQLASTTYFTIILVLFP).

The protein belongs to the cytochrome b family. In terms of assembly, the cytochrome bc1 complex contains 11 subunits: 3 respiratory subunits (MT-CYB, CYC1 and UQCRFS1), 2 core proteins (UQCRC1 and UQCRC2) and 6 low-molecular weight proteins (UQCRH/QCR6, UQCRB/QCR7, UQCRQ/QCR8, UQCR10/QCR9, UQCR11/QCR10 and a cleavage product of UQCRFS1). This cytochrome bc1 complex then forms a dimer. The cofactor is heme b.

It is found in the mitochondrion inner membrane. Component of the ubiquinol-cytochrome c reductase complex (complex III or cytochrome b-c1 complex) that is part of the mitochondrial respiratory chain. The b-c1 complex mediates electron transfer from ubiquinol to cytochrome c. Contributes to the generation of a proton gradient across the mitochondrial membrane that is then used for ATP synthesis. The protein is Cytochrome b (MT-CYB) of Trogon curucui (Blue-crowned trogon).